Reading from the N-terminus, the 283-residue chain is Pantothenate synthetase (283 aa).

30-37 (MGALHEGH) is an ATP binding site. Catalysis depends on histidine 37, which acts as the Proton donor. Residue glutamine 61 participates in (R)-pantoate binding. Residue glutamine 61 participates in beta-alanine binding. 147–150 (GEKD) provides a ligand contact to ATP. Glutamine 153 is a binding site for (R)-pantoate. ATP-binding positions include valine 176 and 184–187 (VSSR).

This sequence belongs to the pantothenate synthetase family. Homodimer.

It is found in the cytoplasm. The enzyme catalyses (R)-pantoate + beta-alanine + ATP = (R)-pantothenate + AMP + diphosphate + H(+). It participates in cofactor biosynthesis; (R)-pantothenate biosynthesis; (R)-pantothenate from (R)-pantoate and beta-alanine: step 1/1. In terms of biological role, catalyzes the condensation of pantoate with beta-alanine in an ATP-dependent reaction via a pantoyl-adenylate intermediate. The chain is Pantothenate synthetase from Chlorobium luteolum (strain DSM 273 / BCRC 81028 / 2530) (Pelodictyon luteolum).